Consider the following 381-residue polypeptide: Erythronate-4-phosphate dehydrogenase (381 aa).

Positions 45 and 67 each coordinate substrate. NAD(+)-binding positions include Asp148, 207–209 (ASR), and Asp233. Arg209 is an active-site residue. Residue Glu238 is part of the active site. The active-site Proton donor is His255. Gly258 is an NAD(+) binding site.

The protein belongs to the D-isomer specific 2-hydroxyacid dehydrogenase family. PdxB subfamily. In terms of assembly, homodimer.

It is found in the cytoplasm. It catalyses the reaction 4-phospho-D-erythronate + NAD(+) = (R)-3-hydroxy-2-oxo-4-phosphooxybutanoate + NADH + H(+). The protein operates within cofactor biosynthesis; pyridoxine 5'-phosphate biosynthesis; pyridoxine 5'-phosphate from D-erythrose 4-phosphate: step 2/5. Catalyzes the oxidation of erythronate-4-phosphate to 3-hydroxy-2-oxo-4-phosphonooxybutanoate. This is Erythronate-4-phosphate dehydrogenase from Idiomarina loihiensis (strain ATCC BAA-735 / DSM 15497 / L2-TR).